A 367-amino-acid chain; its full sequence is Nodulation protein 10 (367 aa).

11 consecutive transmembrane segments (helical) span residues 15 to 37 (FDLL…WLHL), 46 to 66 (VFDL…SGFL), 88 to 108 (IFPA…VTGG), 109 to 129 (LNVT…LTAA), 155 to 175 (VLWT…LLEI), 183 to 203 (GALV…HFNI), 208 to 228 (NPFL…GVLA), 245 to 265 (WWLA…AAFI), 270 to 290 (AAPV…SAAH), 312 to 332 (MLVM…LWIV), and 335 to 355 (VGTV…AMKL).

It belongs to the acyltransferase 3 family.

The protein resides in the cell membrane. Its function is as follows. Not known. NodX allows Rhizobium leguminosarum biovar viciae strain TOM to nodulate Afghanistan peas. This is Nodulation protein 10 (nodX) from Rhizobium leguminosarum bv. viciae.